Consider the following 251-residue polypeptide: 1-(5-phosphoribosyl)-5-[(5-phosphoribosylamino)methylideneamino] imidazole-4-carboxamide isomerase (251 aa).

Aspartate 8 acts as the Proton acceptor in catalysis. Aspartate 131 functions as the Proton donor in the catalytic mechanism.

The protein belongs to the HisA/HisF family.

The protein resides in the cytoplasm. It catalyses the reaction 1-(5-phospho-beta-D-ribosyl)-5-[(5-phospho-beta-D-ribosylamino)methylideneamino]imidazole-4-carboxamide = 5-[(5-phospho-1-deoxy-D-ribulos-1-ylimino)methylamino]-1-(5-phospho-beta-D-ribosyl)imidazole-4-carboxamide. Its pathway is amino-acid biosynthesis; L-histidine biosynthesis; L-histidine from 5-phospho-alpha-D-ribose 1-diphosphate: step 4/9. The sequence is that of 1-(5-phosphoribosyl)-5-[(5-phosphoribosylamino)methylideneamino] imidazole-4-carboxamide isomerase from Thiobacillus denitrificans (strain ATCC 25259 / T1).